Here is a 161-residue protein sequence, read N- to C-terminus: Putative pre-16S rRNA nuclease (161 aa).

This sequence belongs to the YqgF nuclease family.

The protein localises to the cytoplasm. Its function is as follows. Could be a nuclease involved in processing of the 5'-end of pre-16S rRNA. The polypeptide is Putative pre-16S rRNA nuclease (Bradyrhizobium sp. (strain ORS 278)).